We begin with the raw amino-acid sequence, 317 residues long: Acetyl-coenzyme A carboxylase carboxyl transferase subunit alpha (317 aa).

In terms of domain architecture, CoA carboxyltransferase C-terminal spans 37-292 (EINKKLEQTK…ADYITKGYNE (256 aa)).

This sequence belongs to the AccA family. As to quaternary structure, acetyl-CoA carboxylase is a heterohexamer composed of biotin carboxyl carrier protein (AccB), biotin carboxylase (AccC) and two subunits each of ACCase subunit alpha (AccA) and ACCase subunit beta (AccD).

The protein resides in the cytoplasm. The enzyme catalyses N(6)-carboxybiotinyl-L-lysyl-[protein] + acetyl-CoA = N(6)-biotinyl-L-lysyl-[protein] + malonyl-CoA. The protein operates within lipid metabolism; malonyl-CoA biosynthesis; malonyl-CoA from acetyl-CoA: step 1/1. Functionally, component of the acetyl coenzyme A carboxylase (ACC) complex. First, biotin carboxylase catalyzes the carboxylation of biotin on its carrier protein (BCCP) and then the CO(2) group is transferred by the carboxyltransferase to acetyl-CoA to form malonyl-CoA. In Flavobacterium johnsoniae (strain ATCC 17061 / DSM 2064 / JCM 8514 / BCRC 14874 / CCUG 350202 / NBRC 14942 / NCIMB 11054 / UW101) (Cytophaga johnsonae), this protein is Acetyl-coenzyme A carboxylase carboxyl transferase subunit alpha.